We begin with the raw amino-acid sequence, 763 residues long: Protein translocase subunit SecA 2 (763 aa).

ATP-binding positions include Q83, 101–105 (GEGKT), and D490.

Belongs to the SecA family. Monomer and homodimer. Part of the essential Sec protein translocation apparatus which comprises SecA, SecYEG and auxiliary proteins SecDF. Other proteins may also be involved.

It localises to the cell membrane. The protein localises to the cytoplasm. The catalysed reaction is ATP + H2O + cellular proteinSide 1 = ADP + phosphate + cellular proteinSide 2.. Its function is as follows. Part of the Sec protein translocase complex. Interacts with the SecYEG preprotein conducting channel. Has a central role in coupling the hydrolysis of ATP to the transfer of proteins into and across the cell membrane, serving as an ATP-driven molecular motor driving the stepwise translocation of polypeptide chains across the membrane. The chain is Protein translocase subunit SecA 2 from Corynebacterium efficiens (strain DSM 44549 / YS-314 / AJ 12310 / JCM 11189 / NBRC 100395).